Here is a 485-residue protein sequence, read N- to C-terminus: Subtilisin-like protease 1 (485 aa).

A signal peptide spans 1–19; the sequence is MGIFRFISISLAAVSAANA. Residues 20–116 constitute a propeptide that is removed on maturation; sequence GHILSMGHAK…VEPDTTITIH (97 aa). The region spanning 34-116 is the Inhibitor I9 domain; the sequence is SYIVVMKDGT…VEPDTTITIH (83 aa). The region spanning 126 to 400 is the Peptidase S8 domain; it reads SWGLARISSQ…NILINNGDAK (275 aa). Residues D158 and H190 each act as charge relay system in the active site. The N-linked (GlcNAc...) asparagine glycan is linked to N251. The active-site Charge relay system is the S345. Residues 377–394 are compositionally biased toward polar residues; the sequence is GTSSVTNPGPGTRTNILI. A disordered region spans residues 377 to 462; the sequence is GTSSVTNPGP…HTPFPNDDFN (86 aa). Residues 409–418 show a composition bias toward pro residues; the sequence is PSQPPKPSQP. Over residues 419 to 428 the composition is skewed to low complexity; sequence SKPQQPSEPQ. Residues 433 to 455 show a composition bias toward pro residues; that stretch reads PQEPAPGQPAPAPAPVPQHPHTP.

Belongs to the peptidase S8 family.

It is found in the secreted. Secreted subtilisin-like serine protease with keratinolytic activity that contributes to pathogenicity. The protein is Subtilisin-like protease 1 (SUB1) of Arthroderma otae (strain ATCC MYA-4605 / CBS 113480) (Microsporum canis).